A 353-amino-acid chain; its full sequence is Type 2 DNA topoisomerase 6 subunit A (353 aa).

The Topo IIA-type catalytic domain maps to 2 to 138 (NRREIAINKL…LGLMPEEDGA (137 aa)). Y96 acts as the O-(5'-phospho-DNA)-tyrosine intermediate in catalysis. Mg(2+)-binding residues include E186 and D238.

This sequence belongs to the TOP6A family. Homodimer. Heterotetramer of two Top6A and two Top6B chains. Mg(2+) is required as a cofactor.

It carries out the reaction ATP-dependent breakage, passage and rejoining of double-stranded DNA.. Relaxes both positive and negative superturns and exhibits a strong decatenase activity. The protein is Type 2 DNA topoisomerase 6 subunit A of Methanothermobacter thermautotrophicus (strain ATCC 29096 / DSM 1053 / JCM 10044 / NBRC 100330 / Delta H) (Methanobacterium thermoautotrophicum).